The following is a 731-amino-acid chain: Cell death abnormality protein 12 (731 aa).

In terms of domain architecture, ELMO spans 339–485 (AEVQKILDIE…VVLEQLRHVL (147 aa)). In terms of domain architecture, PH spans 544-679 (VRINHLNYLK…WLEGLAELIG (136 aa)). The SH3-binding signature appears at 715–718 (PEIP).

Interacts with psr-1. Forms a ternary complex with ced-2 and ced-5.

It localises to the cytoplasm. Its function is as follows. Involved in programmed apoptosis and necrosis. Required for the cell corpse engulfment process. Has roles in the formation of actin halos and distal tip cell migration. Negatively regulates the unc-6/Netrin receptor unc-5 to control distal tip cell migration along the anterior-posterior axis of the body. Plays no role in amphid axon outgrowth. This chain is Cell death abnormality protein 12, found in Caenorhabditis elegans.